A 282-amino-acid chain; its full sequence is Phosphoglucan phosphatase LSF2, chloroplastic (282 aa).

The transit peptide at 1–61 directs the protein to the chloroplast; it reads MSVIGSKSCI…GENPGTNGVS (61 aa). Substrate contacts are provided by residues Y83, 153–156, D161, and 177–180; these read RHMR and SLEW. The region spanning 92 to 249 is the Tyrosine-protein phosphatase domain; that stretch reads NYTLIRDELI…TYDLAKNDPW (158 aa). C193 acts as the Phosphocysteine intermediate in catalysis. A Glucan phosphatase signature motif CXAGXGR motif is present at residues 193–199; sequence CSAGLGR. Substrate contacts are provided by residues 194 to 199, G230, K245, E251, 259 to 263, and E268; these read SAGLGR and NAFED.

Widely expressed.

The protein localises to the plastid. It localises to the chloroplast. Its function is as follows. Starch-associated phosphoglucan phosphatase that selectively dephosphorylates the glucan C3 position. Probably participates in the regulation of starch degradation. The protein is Phosphoglucan phosphatase LSF2, chloroplastic (LSF2) of Arabidopsis thaliana (Mouse-ear cress).